The following is a 488-amino-acid chain: Dipeptide and tripeptide permease A (488 aa).

The Cytoplasmic segment spans residues 1–35 (MSTANTPEDEQKPSLNAFKQPRAFYLIFSIELWER). The helical transmembrane segment at 36–56 (FGYYGLQGIMAVYLVKMLGMS) threads the bilayer. The Periplasmic segment spans residues 57–60 (EAEA). Residues 61–81 (ITVFAAFTALVYGFVAIGGWL) traverse the membrane as a helical segment. Over 82–90 (GDKILGTKR) the chain is Cytoplasmic. Residues 91 to 111 (VIVLGAIVLAIGYAMVAFSDH) form a helical membrane-spanning segment. At 112–114 (DKD) the chain is on the periplasmic side. A helical transmembrane segment spans residues 115–135 (MIYWGLATIAVGNGLFKANPS). Topologically, residues 136-154 (SLLATCYEKDDPQLDGAFT) are cytoplasmic. Residues 155 to 175 (MYYMSINVGSFLSMLATPWLA) form a helical membrane-spanning segment. The Periplasmic portion of the chain corresponds to 176 to 179 (ANYG). The helical transmembrane segment at 180–200 (WDVAFALSVVGMLITLANFML) threads the bilayer. Residues 201–219 (CRGWIKDKGSRPDFEPLNY) lie on the Cytoplasmic side of the membrane. The helical transmembrane segment at 220 to 240 (LKLLLTLVGIVALTAVSTWLL) threads the bilayer. Residue His-241 is a topological domain, periplasmic. A helical transmembrane segment spans residues 242-262 (NNEVATWSLAIISLGIILIFA). Residues 263–275 (RETFMMKGVARRK) lie on the Cytoplasmic side of the membrane. Residues 276 to 296 (MIVAFLLMVEAVVFFVLYDQM) form a helical membrane-spanning segment. Topologically, residues 297-324 (PTSLNFFAIHNVEHAILGFSVEPEQFQS) are periplasmic. Residues 325–345 (LNPFWIMLASPLLAAIYNFMG) form a helical membrane-spanning segment. Over 346-353 (DKLPMPYK) the chain is Cytoplasmic. The helical transmembrane segment at 354 to 374 (FTVGMFLSATAFLVLPLGASM) threads the bilayer. Residues 375–391 (ANEAGIVSSWWLVASYG) lie on the Periplasmic side of the membrane. Residues 392–412 (FQSIGELMISGLGLAMVAQLV) traverse the membrane as a helical segment. The Cytoplasmic segment spans residues 413-415 (PQR). A helical transmembrane segment spans residues 416–436 (LMGFIMGAWFLTSAAAAIIAG). Residues 437–460 (KVASLMAVPEDVQNAHASLEIYSS) lie on the Periplasmic side of the membrane. The chain crosses the membrane as a helical span at residues 461–481 (VFLQIGIVTGVIALLMLFTAP). At 482–488 (MLSKMTQ) the chain is on the cytoplasmic side.

The protein belongs to the major facilitator superfamily. Proton-dependent oligopeptide transporter (POT/PTR) (TC 2.A.17) family. DtpA subfamily.

The protein resides in the cell inner membrane. Proton-dependent permease that transports di- and tripeptides. The sequence is that of Dipeptide and tripeptide permease A from Proteus mirabilis (strain HI4320).